Here is a 294-residue protein sequence, read N- to C-terminus: Proline iminopeptidase (294 aa).

The AB hydrolase-1 domain occupies 28-278 (PLLLLHGGPG…GCGHMPFVQE (251 aa)). Residue S106 is the Nucleophile of the active site. Residue D245 is part of the active site. The active-site Proton donor is the H272.

The protein belongs to the peptidase S33 family. As to quaternary structure, homotrimer.

The protein resides in the cell envelope. It carries out the reaction Release of N-terminal proline from a peptide.. Inhibited by 3,4-DCI, but no significant effect on enzyme activity by pepstatin A, E-64, 1,10-phenanthroline or EDTA. Its function is as follows. Releases the N-terminal proline from various substrates. Cleaves Pro-betaNA (L-prolyl-beta-naphthylamide) effectively. This is Proline iminopeptidase (pip) from Lactobacillus delbrueckii subsp. lactis.